Consider the following 173-residue polypeptide: Imidazole glycerol phosphate synthase subunit HisH (173 aa).

One can recognise a Glutamine amidotransferase type-1 domain in the interval 2–173 (SVVIINTGCS…SAAIQKNNFW (172 aa)). Catalysis depends on cysteine 77, which acts as the Nucleophile.

In terms of assembly, heterodimer of HisH and HisF.

The protein resides in the cytoplasm. The catalysed reaction is 5-[(5-phospho-1-deoxy-D-ribulos-1-ylimino)methylamino]-1-(5-phospho-beta-D-ribosyl)imidazole-4-carboxamide + L-glutamine = D-erythro-1-(imidazol-4-yl)glycerol 3-phosphate + 5-amino-1-(5-phospho-beta-D-ribosyl)imidazole-4-carboxamide + L-glutamate + H(+). The enzyme catalyses L-glutamine + H2O = L-glutamate + NH4(+). Its pathway is amino-acid biosynthesis; L-histidine biosynthesis; L-histidine from 5-phospho-alpha-D-ribose 1-diphosphate: step 5/9. Its function is as follows. IGPS catalyzes the conversion of PRFAR and glutamine to IGP, AICAR and glutamate. The HisH subunit catalyzes the hydrolysis of glutamine to glutamate and ammonia as part of the synthesis of IGP and AICAR. The resulting ammonia molecule is channeled to the active site of HisF. The protein is Imidazole glycerol phosphate synthase subunit HisH (hisH) of Buchnera aphidicola subsp. Melaphis rhois.